The following is a 383-amino-acid chain: Putative F-box/kelch-repeat protein At1g62270 (383 aa).

Positions 6–51 (TSSFSSLPWDLVEDILARVPATSLKRLRSTCKQWNFLFNDQIFTKM) constitute an F-box domain. Kelch repeat units follow at residues 110–158 (KVFH…YGNY), 160–211 (SCYN…LRGN), and 349–383 (TVYIIGENEYWRKEDIVQRSYRPRMFSYVPSLVQI).

The protein is Putative F-box/kelch-repeat protein At1g62270 of Arabidopsis thaliana (Mouse-ear cress).